The chain runs to 1144 residues: Formin-like protein 18 (1144 aa).

Residues 17–193 (LEISERVYVF…QYISRRNVGS (177 aa)) enclose the Phosphatase tensin-type domain. Cysteine 126 (phosphocysteine intermediate) is an active-site residue. Residues 199–338 (DQALTLDCVN…FSAEVIFSEM (140 aa)) form the C2 tensin-type domain. Disordered stretches follow at residues 429–463 (ISENIVSSPDTSSPEKEKDTMSSHKSYADPNSILK) and 482–729 (KIFS…KGRG). The span at 441 to 450 (SPEKEKDTMS) shows a compositional bias: basic and acidic residues. A compositionally biased stretch (polar residues) spans 491 to 522 (SPVTSPLPNRSPTQGSPASISRFHSSPSSLGI). The span at 526–536 (LHDHGSCKDEE) shows a compositional bias: basic and acidic residues. The span at 538 to 548 (TSSSPASPSIS) shows a compositional bias: low complexity. A compositionally biased stretch (polar residues) spans 555–580 (PLTSSQPKKASPQCPQSPTPVHSNGP). The segment covering 603 to 613 (RPPPPPPPPPI) has biased composition (pro residues). Over residues 614–629 (SSLRSTPSPSSTSNSI) the composition is skewed to low complexity. Residues 633–643 (GPPPPPPPPPL) are compositionally biased toward pro residues. Residues 644 to 653 (QSHRSALSSS) show a composition bias toward low complexity. Residues 669-678 (NPPPPPPPPL) are compositionally biased toward pro residues. Residues 679-695 (HSNSRMGAPTSSLVLKS) are compositionally biased toward low complexity. Pro residues predominate over residues 696 to 705 (PPVPPPPAPA). The region spanning 735-1135 (KGQGQTRKAN…RAQKEAENEK (401 aa)) is the FH2 domain.

The protein belongs to the formin-like family. Class-II subfamily.

The polypeptide is Formin-like protein 18 (FH18) (Arabidopsis thaliana (Mouse-ear cress)).